The primary structure comprises 239 residues: Proteasome activator complex subunit 2 (239 aa).

A2 is modified (N-acetylalanine). A Phosphoserine modification is found at S10.

This sequence belongs to the PA28 family. In terms of assembly, heterodimer of PSME1 and PSME2, which forms a hexameric ring.

Its function is as follows. Implicated in immunoproteasome assembly and required for efficient antigen processing. The PA28 activator complex enhances the generation of class I binding peptides by altering the cleavage pattern of the proteasome. The protein is Proteasome activator complex subunit 2 (PSME2) of Homo sapiens (Human).